The chain runs to 95 residues: DASH complex subunit DAD3 (95 aa).

It belongs to the DASH complex DAD3 family. As to quaternary structure, component of the DASH complex consisting of ASK1, DAD1, DAD2, DAD3, DAD4, DAM1, DUO1, HSK3, SPC19 and SPC34, with a stoichiometry of one copy of each subunit per complex. Multiple DASH complexes oligomerize to form a ring that encircles spindle microtubules and organizes the rod-like NDC80 complexes of the outer kinetochore. DASH complex oligomerization strengthens microtubule attachments. On cytoplasmic microtubules, DASH complexes appear to form patches instead of rings.

The protein localises to the chromosome. The protein resides in the centromere. Its subcellular location is the kinetochore. It is found in the cytoplasm. It localises to the cytoskeleton. The protein localises to the spindle. The protein resides in the nucleus. Component of the DASH complex that connects microtubules with kinetochores and couples microtubule depolymerisation to chromosome movement; it is involved in retrieving kinetochores to the spindle poles before their re-orientation on the spindle in early mitosis and allows microtubule depolymerization to pull chromosomes apart and resist detachment during anaphase. Kinetochores, consisting of a centromere-associated inner segment and a microtubule-contacting outer segment, play a crucial role in chromosome segregation by mediating the physical connection between centromeric DNA and microtubules. Kinetochores also serve as an input point for the spindle assembly checkpoint, which delays anaphase until all chromosomes have bioriented on the mitotic spindle. This chain is DASH complex subunit DAD3, found in Chaetomium thermophilum (strain DSM 1495 / CBS 144.50 / IMI 039719) (Thermochaetoides thermophila).